The chain runs to 221 residues: Translation initiation factor 6 (221 aa).

This sequence belongs to the eIF-6 family.

In terms of biological role, binds to the 50S ribosomal subunit and prevents its association with the 30S ribosomal subunit to form the 70S initiation complex. In Natronomonas pharaonis (strain ATCC 35678 / DSM 2160 / CIP 103997 / JCM 8858 / NBRC 14720 / NCIMB 2260 / Gabara) (Halobacterium pharaonis), this protein is Translation initiation factor 6.